Consider the following 229-residue polypeptide: Germin-like protein 12-2 (229 aa).

Residues 1 to 22 (MASSNFFLLTALIALVATQAMA) form the signal peptide. A disulfide bond links Cys32 and Cys47. The region spanning 62–217 (ANLDKPMDTT…AFQVDKKAVD (156 aa)) is the Cupin type-1 domain. The N-linked (GlcNAc...) asparagine glycan is linked to Asn78. His111, His113, Glu118, and His162 together coordinate Mn(2+).

The protein belongs to the germin family. In terms of assembly, oligomer (believed to be a pentamer but probably hexamer).

The protein resides in the secreted. It is found in the extracellular space. It localises to the apoplast. Its function is as follows. May play a role in plant defense. Probably has no oxalate oxidase activity even if the active site is conserved. This is Germin-like protein 12-2 from Oryza sativa subsp. japonica (Rice).